The chain runs to 171 residues: Large ribosomal subunit protein uL10 (171 aa).

The protein belongs to the universal ribosomal protein uL10 family. Part of the ribosomal stalk of the 50S ribosomal subunit. The N-terminus interacts with L11 and the large rRNA to form the base of the stalk. The C-terminus forms an elongated spine to which L12 dimers bind in a sequential fashion forming a multimeric L10(L12)X complex.

Forms part of the ribosomal stalk, playing a central role in the interaction of the ribosome with GTP-bound translation factors. This is Large ribosomal subunit protein uL10 from Methylocella silvestris (strain DSM 15510 / CIP 108128 / LMG 27833 / NCIMB 13906 / BL2).